Here is a 69-residue protein sequence, read N- to C-terminus: Sperm protamine P1 (69 aa).

The tract at residues 1–69 is disordered; that stretch reads MASYRNSRSR…RKRNNNTENK (69 aa). Composition is skewed to basic residues over residues 7-25 and 34-63; these read SRSR…RSRV and RSSR…RKRN.

The protein belongs to the protamine P1 family. In terms of tissue distribution, testis.

The protein localises to the nucleus. Its subcellular location is the chromosome. Its function is as follows. Protamines substitute for histones in the chromatin of sperm during the haploid phase of spermatogenesis. They compact sperm DNA into a highly condensed, stable and inactive complex. This Perameles gunnii (Eastern barred bandicoot) protein is Sperm protamine P1 (PRM1).